A 720-amino-acid chain; its full sequence is Collectin-12 (720 aa).

The Cytoplasmic portion of the chain corresponds to 1 to 37 (MKDDFNDEEEVQSFGYKRFGIQEGNECTKCKNDWALR). Residues 38-58 (VAIALLYVLCALLTIAVAVLG) form a helical; Signal-anchor for type II membrane protein membrane-spanning segment. The Extracellular segment spans residues 59–720 (YKVVQRMDNV…RTNESKVPVL (662 aa)). 3 coiled-coil regions span residues 95–120 (EKSENATSELHSFKLEFQTLQKQLSD), 216–267 (ISSL…LAAN), and 377–408 (LHGLNNSVAETRAESTELKAQQEELAVRLDKE). The interval 433–576 (FTILQGPPGP…GPPGLPGLPA (144 aa)) is disordered. Collagen-like domains follow at residues 444–503 (GPRG…PGPK) and 510–569 (GRQG…PGPP). The segment covering 460–479 (PKGEKGEKGAPGDAGPKGEK) has biased composition (basic and acidic residues). A compositionally biased stretch (low complexity) spans 488-503 (PGLKGPPGSRGSPGPK). A compositionally biased stretch (gly residues) spans 504–513 (GSRGSGGRQG). Residues 527-560 (PGRDGQPGPTGPQGPQGLRGPAGPAGLEGARGPV) show a composition bias toward low complexity. Positions 562 to 576 (PIGPPGPPGLPGLPA) are enriched in pro residues. Intrachain disulfides connect C604–C615, C634–C709, and C687–C701. The C-type lectin domain occupies 611–710 (FREQCYHFSA…CTERIGFICE (100 aa)). Residues I643, N645, and E649 each contribute to the Ca(2+) site. 3 residues coordinate a carbohydrate: K670, Q673, and D675. Ca(2+)-binding residues include Q673, D675, N676, E685, D686, N697, D698, and E710. Residue E685 participates in a carbohydrate binding. Residues N697 and D698 each coordinate a carbohydrate.

It is found in the membrane. Its function is as follows. Scavenger receptor that displays several functions associated with host defense. Binds to carbohydrates. In Danio rerio (Zebrafish), this protein is Collectin-12 (colec12).